The chain runs to 482 residues: Glutamate--tRNA ligase 2 (482 aa).

The 'HIGH' region motif lies at 8–18; sequence PSPTGQLHIGG. A 'KMSKS' region motif is present at residues 249-253; that stretch reads KLSKR. Lys252 contributes to the ATP binding site.

It belongs to the class-I aminoacyl-tRNA synthetase family. Glutamate--tRNA ligase type 1 subfamily. As to quaternary structure, monomer.

The protein localises to the cytoplasm. The enzyme catalyses tRNA(Glu) + L-glutamate + ATP = L-glutamyl-tRNA(Glu) + AMP + diphosphate. Functionally, catalyzes the attachment of glutamate to tRNA(Glu) in a two-step reaction: glutamate is first activated by ATP to form Glu-AMP and then transferred to the acceptor end of tRNA(Glu). The chain is Glutamate--tRNA ligase 2 from Caldicellulosiruptor saccharolyticus (strain ATCC 43494 / DSM 8903 / Tp8T 6331).